Here is a 277-residue protein sequence, read N- to C-terminus: MNDMGLVIVGAGGRMGQTLIRTVHAMEGVRVVGAIERSGSPHLGRDAGELAGIGIINVEICDEPLSVFAKADGVLDFTTPKATVEFAGYAAQARIVHVIGTTGLSGEDEAAIAAAARHATIVKSGNMSLGVNLLSVLVKQAARALDAADFDIEILEMHHRHKVDAPSGTALLLGEAAAEGRAIELADKSVRVRDGHTGPREAGTIGFATLRGGSVVGEHSVILAGIGERIVLSHLAEDRTIFARGAVKAALWARGRKPGLHSMLDVLGFTENSDQAR.

NAD(+) contacts are provided by residues 10–15 (GAGGRM) and Glu36. Position 37 (Arg37) interacts with NADP(+). NAD(+) is bound by residues 100–102 (GTT) and 124–127 (SGNM). His158 functions as the Proton donor/acceptor in the catalytic mechanism. Position 159 (His159) interacts with (S)-2,3,4,5-tetrahydrodipicolinate. Lys162 (proton donor) is an active-site residue. Position 168–169 (168–169 (GT)) interacts with (S)-2,3,4,5-tetrahydrodipicolinate.

Belongs to the DapB family.

Its subcellular location is the cytoplasm. It carries out the reaction (S)-2,3,4,5-tetrahydrodipicolinate + NAD(+) + H2O = (2S,4S)-4-hydroxy-2,3,4,5-tetrahydrodipicolinate + NADH + H(+). The catalysed reaction is (S)-2,3,4,5-tetrahydrodipicolinate + NADP(+) + H2O = (2S,4S)-4-hydroxy-2,3,4,5-tetrahydrodipicolinate + NADPH + H(+). Its pathway is amino-acid biosynthesis; L-lysine biosynthesis via DAP pathway; (S)-tetrahydrodipicolinate from L-aspartate: step 4/4. Its function is as follows. Catalyzes the conversion of 4-hydroxy-tetrahydrodipicolinate (HTPA) to tetrahydrodipicolinate. This chain is 4-hydroxy-tetrahydrodipicolinate reductase, found in Chelativorans sp. (strain BNC1).